Reading from the N-terminus, the 934-residue chain is Diacylglycerol kinase theta (934 aa).

The tract at residues 1 to 50 (MAAAAEPGARTWPGSGSPRLGSPAGSPVLGISGRTRPGSGPERTSRAIGS) is disordered. 2 positions are modified to phosphoserine: Ser-22 and Ser-26. 3 Phorbol-ester/DAG-type zinc fingers span residues 54–102 (GHSF…KTPC), 115–162 (AHCF…CSDC), and 177–228 (HHHW…APEC). Positions 387-486 (TQEILKIYPG…TRFYVAETRA (100 aa)) constitute a Ras-associating domain. Short sequence motifs (LXXLL motif) lie at residues 547–551 (LYMLA) and 566–570 (LPDVL). In terms of domain architecture, DAGKc spans 576–713 (PDCCPLLVFV…MDRWTILLDA (138 aa)). Residues 905-916 (LRKAKQKPRKAG) are compositionally biased toward basic residues. The disordered stretch occupies residues 905 to 934 (LRKAKQKPRKAGANRDTRVDTLPAPEGNPL).

Belongs to the eukaryotic diacylglycerol kinase family. Interacts with RHOA (constitutively activated, GTP-bound); the interaction inhibits DGKQ. Interacts with PRKCE. Interacts with PRKCH. Interacts with PLCB1. Interacts with NR5A1; the interaction requires both LXXLL motifs in DGKQ and is required for full phosphatidic acid-mediated activation of NR5A1. In terms of processing, phosphorylated by PRKCE and PRKCH in vitro. Widely expressed in all brain regions, including the cortex and hippocampus with a specific expression in neuronal cells (at protein level).

The protein localises to the cytoplasm. It localises to the cytosol. It is found in the cell membrane. The protein resides in the synapse. Its subcellular location is the cytoskeleton. The protein localises to the nucleus. It localises to the nucleus speckle. It is found in the nucleus matrix. The enzyme catalyses a 1,2-diacyl-sn-glycerol + ATP = a 1,2-diacyl-sn-glycero-3-phosphate + ADP + H(+). It carries out the reaction a 1-O-alkyl-sn-glycerol + ATP = a 1-O-alkyl-sn-glycero-3-phosphate + ADP + H(+). The catalysed reaction is 1-O-alkyl-2-acyl-sn-glycerol + ATP = 1-O-alkyl-2-acyl-sn-glycero-3-phosphate + ADP + H(+). It catalyses the reaction 1,2-di-(9Z-octadecenoyl)-sn-glycerol + ATP = 1,2-di-(9Z-octadecenoyl)-sn-glycero-3-phosphate + ADP + H(+). The enzyme catalyses 1-O-hexadecyl-sn-glycerol + ATP = 1-O-hexadecyl-sn-glycero-3-phosphate + ADP + H(+). It carries out the reaction 1-O-hexadecyl-2-acetyl-sn-glycerol + ATP = 1-O-hexadecyl-2-acetyl-sn-glycero-3-phosphate + ADP + H(+). The catalysed reaction is 1-octadecanoyl-2-(5Z,8Z,11Z,14Z-eicosatetraenoyl)-sn-glycerol + ATP = 1-octadecanoyl-2-(5Z,8Z,11Z,14Z-eicosatetraenoyl)-sn-glycero-3-phosphate + ADP + H(+). Its pathway is lipid metabolism; glycerolipid metabolism. Activated by phosphatidylserine. Its function is as follows. Diacylglycerol kinase that converts diacylglycerol/DAG into phosphatidic acid/phosphatidate/PA and regulates the respective levels of these two bioactive lipids. Thereby, acts as a central switch between the signaling pathways activated by these second messengers with different cellular targets and opposite effects in numerous biological processes. Within the adrenocorticotropic hormone signaling pathway, produces phosphatidic acid which in turn activates NR5A1 and subsequent steroidogenic gene transcription. Also functions downstream of the nerve growth factor signaling pathway being specifically activated in the nucleus by the growth factor. Through its diacylglycerol activity also regulates synaptic vesicle endocytosis. This Mus musculus (Mouse) protein is Diacylglycerol kinase theta (Dgkq).